The following is a 110-amino-acid chain: Phosphoribosyl-AMP cyclohydrolase (110 aa).

Residue D74 participates in Mg(2+) binding. A Zn(2+)-binding site is contributed by C75. 2 residues coordinate Mg(2+): D76 and D78. Zn(2+)-binding residues include C91 and C98.

It belongs to the PRA-CH family. As to quaternary structure, homodimer. Requires Mg(2+) as cofactor. Zn(2+) serves as cofactor.

It is found in the cytoplasm. It catalyses the reaction 1-(5-phospho-beta-D-ribosyl)-5'-AMP + H2O = 1-(5-phospho-beta-D-ribosyl)-5-[(5-phospho-beta-D-ribosylamino)methylideneamino]imidazole-4-carboxamide. Its pathway is amino-acid biosynthesis; L-histidine biosynthesis; L-histidine from 5-phospho-alpha-D-ribose 1-diphosphate: step 3/9. In terms of biological role, catalyzes the hydrolysis of the adenine ring of phosphoribosyl-AMP. The chain is Phosphoribosyl-AMP cyclohydrolase from Lacticaseibacillus paracasei (strain ATCC 334 / BCRC 17002 / CCUG 31169 / CIP 107868 / KCTC 3260 / NRRL B-441) (Lactobacillus paracasei).